The following is a 358-amino-acid chain: Magnesium-protoporphyrin IX monomethyl ester [oxidative] cyclase 2 (358 aa).

It belongs to the AcsF family. Fe cation is required as a cofactor.

It catalyses the reaction Mg-protoporphyrin IX 13-monomethyl ester + 3 NADPH + 3 O2 + 2 H(+) = 3,8-divinyl protochlorophyllide a + 3 NADP(+) + 5 H2O. It participates in porphyrin-containing compound metabolism; chlorophyll biosynthesis (light-independent). Functionally, catalyzes the formation of the isocyclic ring in chlorophyll biosynthesis. Mediates the cyclase reaction, which results in the formation of divinylprotochlorophyllide (Pchlide) characteristic of all chlorophylls from magnesium-protoporphyrin IX 13-monomethyl ester (MgPMME). This chain is Magnesium-protoporphyrin IX monomethyl ester [oxidative] cyclase 2, found in Synechocystis sp. (strain ATCC 27184 / PCC 6803 / Kazusa).